The following is a 294-amino-acid chain: Putative glucose-6-phosphate 1-epimerase (294 aa).

Substrate contacts are provided by arginine 74 and arginine 99. Histidine 164 is a catalytic residue. Aspartate 208 lines the substrate pocket. Glutamate 267 is a catalytic residue.

The protein belongs to the glucose-6-phosphate 1-epimerase family. In terms of assembly, monomer in solution.

The enzyme catalyses alpha-D-glucose 6-phosphate = beta-D-glucose 6-phosphate. In Escherichia coli (strain K12), this protein is Putative glucose-6-phosphate 1-epimerase (yeaD).